The chain runs to 511 residues: MIQIKRALISVSDKSGLVEFAKFLNQNGVEIISTGGTLKLLKDNGIAAIAIDDYTGFPEILDGRVKTLHPKVHGGLLGVISNPAHKQKMEELKIPKIDLVVVNLYPFLKTVSKPEVQLEEAIENIDIGGPSMIRSAAKNYKHTLVLTDPNDYKKIQNLISSSGISEEISASYMRKAFSHTAMYDAAISSWFYKQSGEVFPDVLNLSFIKKQKLRYGENPHQAASFYEPLFTKSDFSPLQGKELSFNNMLDFDAAFHISSLLPENTVCIIKHLNPCGIAYADNPLEAFQLARRTDPISAFGGVIGIKGQVNGELATSITENFVEGVIAQKFTQEALEVFSKKPNIRLIEIQDFKEALDELDLRPIHHGLLIQDRDYTTITEKDLKVVTKKQPSPDDIRGLMFAWSCVRFIKSNAIVYTEENATLGIGAGQMSRVDSVQLGANKALNVGLSVVGSYVASDAFFPFRDGIDALAKAGAKAIIQPGGSVRDEEVIQAADEHGLIMVFTGMRHFRH.

In terms of domain architecture, MGS-like spans 1-147 (MIQIKRALIS…KNYKHTLVLT (147 aa)).

Belongs to the PurH family.

It catalyses the reaction (6R)-10-formyltetrahydrofolate + 5-amino-1-(5-phospho-beta-D-ribosyl)imidazole-4-carboxamide = 5-formamido-1-(5-phospho-D-ribosyl)imidazole-4-carboxamide + (6S)-5,6,7,8-tetrahydrofolate. The enzyme catalyses IMP + H2O = 5-formamido-1-(5-phospho-D-ribosyl)imidazole-4-carboxamide. It functions in the pathway purine metabolism; IMP biosynthesis via de novo pathway; 5-formamido-1-(5-phospho-D-ribosyl)imidazole-4-carboxamide from 5-amino-1-(5-phospho-D-ribosyl)imidazole-4-carboxamide (10-formyl THF route): step 1/1. The protein operates within purine metabolism; IMP biosynthesis via de novo pathway; IMP from 5-formamido-1-(5-phospho-D-ribosyl)imidazole-4-carboxamide: step 1/1. This chain is Bifunctional purine biosynthesis protein PurH, found in Leptospira interrogans serogroup Icterohaemorrhagiae serovar Lai (strain 56601).